Consider the following 304-residue polypeptide: MHRLRQCNMKWGAEEEKKIELQAQGLQPDTLFSDVIKRYLNKITPTKRGEKHEFNRLNRFLRHPVTDKYISDVSRRDIEDWIAERLESVKSESVRRELSTIGHIFKIALERWGYIQKSPMVGIQLPEKGKPRTQRVTEENINAIVAISEYVDTLKTAKARTAAAILFAVETAMRAGKICSLSWGNVNFEKRTAFLPMTKNGTSRTVPLTKNAIAILERLKVEIGDAGLCFDIKSSVLDATFRKLKKLAEREYLHFHDTRREALTRLSKKVDVMTLAKISGHKDISILQNVYYAPDMAEVAELLD.

The Core-binding (CB) domain maps to 30–109 (TLFSDVIKRY…TIGHIFKIAL (80 aa)). The Tyr recombinase domain occupies 131-304 (PRTQRVTEEN…DMAEVAELLD (174 aa)). Catalysis depends on residues Arg-174, Lys-199, His-256, Arg-259, and His-281. Tyr-291 serves as the catalytic O-(3'-phospho-DNA)-tyrosine intermediate.

Belongs to the 'phage' integrase family.

This is Putative integrase/recombinase HI_1414 from Haemophilus influenzae (strain ATCC 51907 / DSM 11121 / KW20 / Rd).